A 546-amino-acid chain; its full sequence is Phosphatidylinositol 4-phosphate 5-kinase type-1 alpha (546 aa).

In terms of domain architecture, PIPK spans 65–433; it reads TSSALKGAIQ…RFQRFMCNTV (369 aa). A Glycyl lysine isopeptide (Lys-Gly) (interchain with G-Cter in ubiquitin) cross-link involves residue Lys87. The segment at 441–522 is disordered; the sequence is PSPTKKFRSG…PGPSFSPAVG (82 aa). Residues 449-461 are compositionally biased toward low complexity; sequence SGPSFSRRSGPSG. Positions 462–471 are enriched in polar residues; sequence NSCTPSQPTA. The segment covering 473 to 493 has biased composition (basic and acidic residues); that stretch reads GEHKAQVTTKAEVEPDIHLGR.

As to quaternary structure, interacts with RAC1. Interacts with TUT1. Forms a complex with CDH1/E-cadherin, CTNNB1/beta-catenin and CTNND1 at the plasma membrane upon calcium stimulation. Found in a ternary complex with IRS1 and DGKZ in the absence of insulin stimulation. Interacts with DGKZ. Interacts with PIP4K2C; the interaction inhibits PIP5K1A kinase activity.

Its subcellular location is the cell membrane. The protein localises to the cytoplasm. It localises to the nucleus. The protein resides in the nucleus speckle. It is found in the cell projection. Its subcellular location is the ruffle. The protein localises to the lamellipodium. It catalyses the reaction a 1,2-diacyl-sn-glycero-3-phospho-(1D-myo-inositol 4-phosphate) + ATP = a 1,2-diacyl-sn-glycero-3-phospho-(1D-myo-inositol-4,5-bisphosphate) + ADP + H(+). It carries out the reaction 1-octadecanoyl-2-(5Z,8Z,11Z,14Z)-eicosatetraenoyl-sn-glycero-3-phospho-1D-myo-inositol 4-phosphate + ATP = 1-octadecanoyl-2-(5Z,8Z,11Z,14Z)-eicosatetraenoyl-sn-glycero-3-phospho-1D-myo-inositol 4,5-bisphosphate + ADP + H(+). The catalysed reaction is 1,2-dihexadecanoyl-sn-glycero-3-phospho-(1D-myo-inositol-4-phosphate) + ATP = 1,2-dihexadecanoyl-sn-glycero-3-phospho-(1D-myo-inositol-4,5-bisphosphate) + ADP + H(+). The enzyme catalyses 1-octadecanoyl-2-(9Z)-octadecenoyl-sn-glycero-3-phospho-1D-myo-inositol 4-phosphate + ATP = 1-octadecanoyl-2-(9Z)-octadecenoyl-sn-glycero-3-phospho-1D-myo-inositol 4,5-bisphosphate + ADP + H(+). It catalyses the reaction 1-octadecanoyl-2-(9Z)-octadecenoyl-sn-glycero-3-phospho-1D-myo-inositol + ATP = 1-octadecanoyl-2-(9Z)-octadecenoyl-sn-glycero-3-phospho-1D-myo-inositol 5-phosphate + ADP + H(+). It carries out the reaction 1-octadecanoyl-2-(9Z,12Z)-octadecadienoyl-sn-glycero-3-phospho-1D-myo-inositol + ATP = 1-octadecanoyl-2-(9Z,12Z)-octadecadienoyl-sn-glycero-3-phospho-1D-myo-inositol 5-phosphate + ADP + H(+). The catalysed reaction is 1-octadecanoyl-2-(5Z,8Z,11Z,14Z-eicosatetraenoyl)-sn-glycero-3-phospho-(1D-myo-inositol) + ATP = 1-octadecanoyl-2-(5Z,8Z,11Z,14Z)-eicosatetraenoyl-sn-glycero-3-phospho-1D-myo-inositol 5-phosphate + ADP + H(+). The enzyme catalyses 1,2-di-(9Z,12Z)-octadecadienoyl-sn-glycero-3-phospho-1D-myo-inositol + ATP = 1,2-di(9Z,12Z)-octadecadienoyl-sn-glycero-3-phospho-1D-myo-inositol 5-phosphate + ADP + H(+). In terms of biological role, catalyzes the phosphorylation of phosphatidylinositol 4-phosphate (PtdIns(4)P/PI4P) to form phosphatidylinositol 4,5-bisphosphate (PtdIns(4,5)P2/PIP2), a lipid second messenger that regulates several cellular processes such as signal transduction, vesicle trafficking, actin cytoskeleton dynamics, cell adhesion, and cell motility. PtdIns(4,5)P2 can directly act as a second messenger or can be utilized as a precursor to generate other second messengers: inositol 1,4,5-trisphosphate (IP3), diacylglycerol (DAG) or phosphatidylinositol-3,4,5-trisphosphate (PtdIns(3,4,5)P3/PIP3). PIP5K1A-mediated phosphorylation of PtdIns(4)P is the predominant pathway for PtdIns(4,5)P2 synthesis. Can also use phosphatidylinositol (PtdIns) as substrate in vitro. Together with PIP5K1C, is required for phagocytosis, both enzymes regulating different types of actin remodeling at sequential steps. Promotes particle ingestion by activating the WAS GTPase-binding protein that induces Arp2/3 dependent actin polymerization at the nascent phagocytic cup. Together with PIP5K1B, is required, after stimulation by G-protein coupled receptors, for the synthesis of IP3 that will induce stable platelet adhesion. Recruited to the plasma membrane by the E-cadherin/beta-catenin complex where it provides the substrate PtdIns(4,5)P2 for the production of PtdIns(3,4,5)P3, IP3 and DAG, that will mobilize internal calcium and drive keratinocyte differentiation. Positively regulates insulin-induced translocation of SLC2A4 to the cell membrane in adipocytes. Together with PIP5K1C has a role during embryogenesis. Independently of its catalytic activity, is required for membrane ruffling formation, actin organization and focal adhesion formation during directional cell migration by controlling integrin-induced translocation of the small GTPase RAC1 to the plasma membrane. Also functions in the nucleus where it acts as an activator of TUT1 adenylyltransferase activity in nuclear speckles, thereby regulating mRNA polyadenylation of a select set of mRNAs. This Rattus norvegicus (Rat) protein is Phosphatidylinositol 4-phosphate 5-kinase type-1 alpha.